We begin with the raw amino-acid sequence, 444 residues long: 23S rRNA (uracil(1939)-C(5))-methyltransferase RlmD (444 aa).

The region spanning 5–67 (RNRFDRTPFQ…RHFDEAKTVE (63 aa)) is the TRAM domain. Cys80, Cys86, Cys89, and Cys168 together coordinate [4Fe-4S] cluster. 6 residues coordinate S-adenosyl-L-methionine: Gln276, Phe305, Asn310, Glu326, Asp353, and Asp374. The Nucleophile role is filled by Cys400.

The protein belongs to the class I-like SAM-binding methyltransferase superfamily. RNA M5U methyltransferase family. RlmD subfamily.

It carries out the reaction uridine(1939) in 23S rRNA + S-adenosyl-L-methionine = 5-methyluridine(1939) in 23S rRNA + S-adenosyl-L-homocysteine + H(+). Catalyzes the formation of 5-methyl-uridine at position 1939 (m5U1939) in 23S rRNA. This is 23S rRNA (uracil(1939)-C(5))-methyltransferase RlmD from Xanthomonas campestris pv. campestris (strain 8004).